Consider the following 179-residue polypeptide: Low molecular weight phosphotyrosine protein phosphatase (179 aa).

Cys-15 functions as the Nucleophile in the catalytic mechanism. Arg-21 is an active-site residue. The active-site Proton donor is Asp-148.

It belongs to the low molecular weight phosphotyrosine protein phosphatase family.

Its subcellular location is the cytoplasm. The catalysed reaction is O-phospho-L-tyrosyl-[protein] + H2O = L-tyrosyl-[protein] + phosphate. The enzyme catalyses a phosphate monoester + H2O = an alcohol + phosphate. Its function is as follows. Acts on tyrosine phosphorylated proteins, low-MW aryl phosphates and natural and synthetic acyl phosphates. This chain is Low molecular weight phosphotyrosine protein phosphatase (acp1), found in Dictyostelium discoideum (Social amoeba).